The chain runs to 231 residues: Biosynthetic peptidoglycan transglycosylase (231 aa).

Residues 12–34 (AAVLAGLALLLVALAVSYRWVPP) traverse the membrane as a helical segment.

This sequence belongs to the glycosyltransferase 51 family.

It is found in the cell inner membrane. It catalyses the reaction [GlcNAc-(1-&gt;4)-Mur2Ac(oyl-L-Ala-gamma-D-Glu-L-Lys-D-Ala-D-Ala)](n)-di-trans,octa-cis-undecaprenyl diphosphate + beta-D-GlcNAc-(1-&gt;4)-Mur2Ac(oyl-L-Ala-gamma-D-Glu-L-Lys-D-Ala-D-Ala)-di-trans,octa-cis-undecaprenyl diphosphate = [GlcNAc-(1-&gt;4)-Mur2Ac(oyl-L-Ala-gamma-D-Glu-L-Lys-D-Ala-D-Ala)](n+1)-di-trans,octa-cis-undecaprenyl diphosphate + di-trans,octa-cis-undecaprenyl diphosphate + H(+). Its pathway is cell wall biogenesis; peptidoglycan biosynthesis. Peptidoglycan polymerase that catalyzes glycan chain elongation from lipid-linked precursors. This chain is Biosynthetic peptidoglycan transglycosylase, found in Rhodospirillum centenum (strain ATCC 51521 / SW).